Reading from the N-terminus, the 288-residue chain is Translocon-associated protein subunit alpha (288 aa).

A signal peptide spans 1 to 28; the sequence is MFNFGSKILVLFLVAFPCGLISFGRVSA. Residues 29 to 208 lie on the Lumenal side of the membrane; that stretch reads DSESAEDIFP…ELEEGLDGET (180 aa). Positions 34–69 are disordered; sequence EDIFPDSTVDEEEEEEEDEVLVEEDQVPGSETEDDI. N-linked (GlcNAc...) asparagine glycans are attached at residues asparagine 137 and asparagine 192. A helical transmembrane segment spans residues 209–229; that stretch reads IFMYIFLTGLVVLAVFGMYQV. Over 230-288 the chain is Cytoplasmic; that stretch reads LESRTRKRFPVKVETGTGGMNGVDISWIPQETLNIMSKASASPKASPRKRTKRAVGVDQ. A disordered region spans residues 267–288; it reads KASASPKASPRKRTKRAVGVDQ.

This sequence belongs to the TRAP-alpha family. As to quaternary structure, heterotetramer of TRAP-alpha, TRAP-beta, TRAP-delta and TRAP-gamma. In terms of processing, phosphorylated in its cytoplasmic tail.

Its subcellular location is the endoplasmic reticulum membrane. TRAP proteins are part of a complex whose function is to bind calcium to the ER membrane and thereby regulate the retention of ER resident proteins. May be involved in the recycling of the translocation apparatus after completion of the translocation process or may function as a membrane-bound chaperone facilitating folding of translocated proteins. This Oncorhynchus mykiss (Rainbow trout) protein is Translocon-associated protein subunit alpha (ssr1).